The primary structure comprises 314 residues: tRNA uridine(34) hydroxylase (314 aa).

Residues 140 to 234 enclose the Rhodanese domain; sequence ARDDVILIDT…YLEETPPDES (95 aa). Catalysis depends on Cys-194, which acts as the Cysteine persulfide intermediate.

This sequence belongs to the TrhO family.

The enzyme catalyses uridine(34) in tRNA + AH2 + O2 = 5-hydroxyuridine(34) in tRNA + A + H2O. Functionally, catalyzes oxygen-dependent 5-hydroxyuridine (ho5U) modification at position 34 in tRNAs. The sequence is that of tRNA uridine(34) hydroxylase from Acinetobacter baumannii (strain SDF).